The primary structure comprises 393 residues: MVTVEEVRKAQRAEGPATILAIGTVTPANCVNQSTYPDYYFRITNSEHKTELKEKFQRMCDKSMITKRYMHLTEEILKENPSFCEYMAPSLDARQDIAVVEVPKLGKEAAQSAIKEWGQPKSKITHVVFCTTSGVDMPGADYQLTKLLGLSPSVKRLMMYQQGCFAGGTVLRLAKDLAENNKGARVLIVCSEITVVTFRGPSETHLDSLVGQALFGDGAAAVIVGADPTPAEKPLFQLVSAAQTLAPDSCGAIDGHLREVGLTFHLLKDVPSVVSNNIEKCLFEAFNPLGISDWNSVFWIAHPGGPAILDQVEDKLGLKPEKLRATRHVLSEYGNMSSACVLFILDEMRKASSNAGLGTTGEGLEWGVLFGFGPGLTIETVVLHSVPIKPGPH.

Cys-164 is an active-site residue.

The protein belongs to the thiolase-like superfamily. Chalcone/stilbene synthases family.

The enzyme catalyses (E)-4-coumaroyl-CoA + 3 malonyl-CoA + 3 H(+) = 2',4,4',6'-tetrahydroxychalcone + 3 CO2 + 4 CoA. It functions in the pathway secondary metabolite biosynthesis; flavonoid biosynthesis. Functionally, the primary product of this enzyme is 4,2',4',6'-tetrahydroxychalcone (also termed naringenin-chalcone or chalcone) which can under specific conditions spontaneously isomerize into naringenin. This chain is Chalcone synthase LF2 (CHS-LF2), found in Ipomoea batatas (Sweet potato).